Consider the following 197-residue polypeptide: MKKRRSKKERQELLQQTIETNPFITDEDLAEKFQVSIQTVRLDRMELSIPELRERIKHVATKQHEEDVKSLPLEEVVGEIIDIELDRHAISIFEVKVEHVFKRNQIARGHHLFAQANSLAVAVIDEELALTAKSTIRYIRPVKLGERVVAKVRVEDVENDKGRTVVKVRSFVGEELVFTGTFEMYRSSNYSEEGNNL.

This sequence belongs to the FapR family.

Its function is as follows. Transcriptional factor involved in regulation of membrane lipid biosynthesis by repressing genes involved in fatty acid and phospholipid metabolism. In Bacillus mycoides (strain KBAB4) (Bacillus weihenstephanensis), this protein is Transcription factor FapR.